The primary structure comprises 65 residues: Vespid chemotactic peptide 5h (65 aa).

Positions M1 to A23 are cleaved as a signal peptide. AXPX repeat units follow at residues A23–A26, A27–L30, A31–G34, A35–D38, A39–N42, A43–L46, and A47–F50. Residues A24–P49 constitute a propeptide that is removed on maturation. L62 is subject to Leucine amide.

The protein belongs to the MCD family. Crabrolin subfamily. As to expression, expressed by the venom gland.

It localises to the secreted. In terms of biological role, shows antimicrobial activity against the Gram-negative bacteria E.coli ATCC 25922 (MIC=30 ug/ml), the Gram-positive bacteria S.aureus ATCC 2592 (MIC=5 ug/ml) and the fungus C.albicans ATCC 2002 (MIC=25 ug/ml). Acts as a mast cell degranulating peptide. Its mast cell degranulation activity may be related to the activation of G-protein coupled receptors in mast cells as well as interaction with other proteins located in cell endosomal membranes in the mast cells. Induces the chemotaxis of neutrophils. In Vespa magnifica (Hornet), this protein is Vespid chemotactic peptide 5h.